A 639-amino-acid polypeptide reads, in one-letter code: Coiled-coil domain-containing protein 27 (639 aa).

Residues 154-176 (YPRKRSEPSDPSPTGSPTVVKKS) are disordered. Residues 203–242 (QRFSEMESQMQKKDQEILTLQKEKEALKKQLKNLLRGKGT) adopt a coiled-coil conformation. The tract at residues 291 to 385 (ESSKELHVEP…EECHPKRSYS (95 aa)) is disordered. Residues 292–309 (SSKELHVEPGSAIEEKSS) are compositionally biased toward basic and acidic residues. The segment covering 310–320 (EGPPEEAAAAK) has biased composition (low complexity). Composition is skewed to acidic residues over residues 336-350 (GPEE…EVEG) and 358-369 (EGEILVNEEEAS). Over residues 370–380 (WELREDEECHP) the composition is skewed to basic and acidic residues.

The protein is Coiled-coil domain-containing protein 27 (Ccdc27) of Mus musculus (Mouse).